A 260-amino-acid polypeptide reads, in one-letter code: NH(3)-dependent NAD(+) synthetase (260 aa).

31-38 (GLSGGLDS) provides a ligand contact to ATP. D37 is a Mg(2+) binding site. R112 lines the deamido-NAD(+) pocket. T132 serves as a coordination point for ATP. E137 provides a ligand contact to Mg(2+). Residues K161 and S183 each contribute to the ATP site.

It belongs to the NAD synthetase family. As to quaternary structure, homodimer.

The catalysed reaction is deamido-NAD(+) + NH4(+) + ATP = AMP + diphosphate + NAD(+) + H(+). Its pathway is cofactor biosynthesis; NAD(+) biosynthesis; NAD(+) from deamido-NAD(+) (ammonia route): step 1/1. Catalyzes the ATP-dependent amidation of deamido-NAD to form NAD. Uses ammonia as a nitrogen source. The chain is NH(3)-dependent NAD(+) synthetase from Helicobacter pylori (strain HPAG1).